Here is a 374-residue protein sequence, read N- to C-terminus: Flagellar P-ring protein (374 aa).

Residues 1 to 29 (MPGVGISRIVRIAVAALVALAPLMTPAHA) form the signal peptide.

This sequence belongs to the FlgI family. In terms of assembly, the basal body constitutes a major portion of the flagellar organelle and consists of four rings (L,P,S, and M) mounted on a central rod.

It localises to the periplasm. The protein localises to the bacterial flagellum basal body. Functionally, assembles around the rod to form the L-ring and probably protects the motor/basal body from shearing forces during rotation. The sequence is that of Flagellar P-ring protein from Nitrobacter hamburgensis (strain DSM 10229 / NCIMB 13809 / X14).